A 494-amino-acid polypeptide reads, in one-letter code: Guanosine-5'-triphosphate,3'-diphosphate pyrophosphatase (494 aa).

It belongs to the GppA/Ppx family. GppA subfamily.

It carries out the reaction guanosine 3'-diphosphate 5'-triphosphate + H2O = guanosine 3',5'-bis(diphosphate) + phosphate + H(+). The protein operates within purine metabolism; ppGpp biosynthesis; ppGpp from GTP: step 2/2. Its function is as follows. Catalyzes the conversion of pppGpp to ppGpp. Guanosine pentaphosphate (pppGpp) is a cytoplasmic signaling molecule which together with ppGpp controls the 'stringent response', an adaptive process that allows bacteria to respond to amino acid starvation, resulting in the coordinated regulation of numerous cellular activities. The polypeptide is Guanosine-5'-triphosphate,3'-diphosphate pyrophosphatase (Shigella flexneri serotype 5b (strain 8401)).